Here is a 334-residue protein sequence, read N- to C-terminus: N-acetylmuramate/N-acetylglucosamine kinase (334 aa).

It belongs to the kinase AmgK family.

It carries out the reaction N-acetyl-D-muramate + ATP = N-acetyl-alpha-D-muramate 1-phosphate + ADP + H(+). It catalyses the reaction N-acetyl-D-glucosamine + ATP = N-acetyl-alpha-D-glucosamine 1-phosphate + ADP + H(+). Its pathway is cell wall biogenesis; peptidoglycan recycling. Its function is as follows. Sugar kinase that catalyzes the ATP-dependent phosphorylation of N-acetylmuramate (MurNAc) and N-acetylglucosamine (GlcNAc) at its C1 hydroxyl group, leading to MurNAc alpha-1P and GlcNAc alpha-1P, respectively. Is likely involved in peptidoglycan recycling as part of a cell wall recycling pathway that bypasses de novo biosynthesis of the peptidoglycan precursor UDP-MurNAc. Is able to complement the fosfomycin sensitivity phenotype of a P.putida mutant lacking amgK. The polypeptide is N-acetylmuramate/N-acetylglucosamine kinase (Neisseria meningitidis serogroup B (strain ATCC BAA-335 / MC58)).